The chain runs to 360 residues: Peptide chain release factor 1 (360 aa).

Gln-235 is modified (N5-methylglutamine). Residues 285 to 295 (RQAAEQTDMRR) show a composition bias toward basic and acidic residues. Positions 285 to 309 (RQAAEQTDMRRNLLGSGDRSDKIRT) are disordered.

Belongs to the prokaryotic/mitochondrial release factor family. Post-translationally, methylated by PrmC. Methylation increases the termination efficiency of RF1.

The protein resides in the cytoplasm. Its function is as follows. Peptide chain release factor 1 directs the termination of translation in response to the peptide chain termination codons UAG and UAA. The protein is Peptide chain release factor 1 (prfA) of Haemophilus influenzae (strain ATCC 51907 / DSM 11121 / KW20 / Rd).